The chain runs to 237 residues: Beta-glucanase (237 aa).

An N-terminal signal peptide occupies residues 1-23 (MKKKSCFTLVTTFAFSLIFSVSA). Residues 28 to 237 (VFWEPLSYFN…EYDWVKYTSN (210 aa)) form the GH16 domain. C55 and C84 are oxidised to a cystine. E128 acts as the Nucleophile in catalysis. E132 (proton donor) is an active-site residue.

The protein belongs to the glycosyl hydrolase 16 family.

The enzyme catalyses Hydrolysis of (1-&gt;4)-beta-D-glucosidic linkages in beta-D-glucans containing (1-&gt;3)- and (1-&gt;4)-bonds.. In Paenibacillus macerans (Bacillus macerans), this protein is Beta-glucanase.